The following is a 328-amino-acid chain: Biotin synthase (328 aa).

Residues 49–273 (FNKEKIETCS…ICISRIIMPE (225 aa)) enclose the Radical SAM core domain. Cys-67, Cys-71, and Cys-74 together coordinate [4Fe-4S] cluster. 4 residues coordinate [2Fe-2S] cluster: Ser-110, Cys-142, Cys-201, and Arg-277.

It belongs to the radical SAM superfamily. Biotin synthase family. As to quaternary structure, homodimer. Requires [4Fe-4S] cluster as cofactor. [2Fe-2S] cluster is required as a cofactor.

It carries out the reaction (4R,5S)-dethiobiotin + (sulfur carrier)-SH + 2 reduced [2Fe-2S]-[ferredoxin] + 2 S-adenosyl-L-methionine = (sulfur carrier)-H + biotin + 2 5'-deoxyadenosine + 2 L-methionine + 2 oxidized [2Fe-2S]-[ferredoxin]. It participates in cofactor biosynthesis; biotin biosynthesis; biotin from 7,8-diaminononanoate: step 2/2. Its function is as follows. Catalyzes the conversion of dethiobiotin (DTB) to biotin by the insertion of a sulfur atom into dethiobiotin via a radical-based mechanism. This Methanococcus vannielii (strain ATCC 35089 / DSM 1224 / JCM 13029 / OCM 148 / SB) protein is Biotin synthase.